Reading from the N-terminus, the 438-residue chain is 3-phosphoshikimate 1-carboxyvinyltransferase (438 aa).

Residues lysine 20, serine 21, and arginine 25 each contribute to the 3-phosphoshikimate site. Phosphoenolpyruvate is bound at residue lysine 20. Phosphoenolpyruvate-binding residues include glycine 90 and arginine 118. 3-phosphoshikimate contacts are provided by serine 163, serine 164, glutamine 165, serine 191, aspartate 320, and lysine 347. Glutamine 165 provides a ligand contact to phosphoenolpyruvate. The Proton acceptor role is filled by aspartate 320. 2 residues coordinate phosphoenolpyruvate: arginine 351 and arginine 392.

The protein belongs to the EPSP synthase family. Monomer.

The protein localises to the cytoplasm. It carries out the reaction 3-phosphoshikimate + phosphoenolpyruvate = 5-O-(1-carboxyvinyl)-3-phosphoshikimate + phosphate. Its pathway is metabolic intermediate biosynthesis; chorismate biosynthesis. In terms of biological role, catalyzes the transfer of the enolpyruvyl moiety of phosphoenolpyruvate (PEP) to the 5-hydroxyl of shikimate-3-phosphate (S3P) to produce enolpyruvyl shikimate-3-phosphate and inorganic phosphate. The protein is 3-phosphoshikimate 1-carboxyvinyltransferase of Natronomonas pharaonis (strain ATCC 35678 / DSM 2160 / CIP 103997 / JCM 8858 / NBRC 14720 / NCIMB 2260 / Gabara) (Halobacterium pharaonis).